The primary structure comprises 1092 residues: SUMO-specific isopeptidase USPL1 (1092 aa).

2 disordered regions span residues 145-168 (VYDE…TADS) and 185-207 (TKDP…EGCT). 2 stretches are compositionally biased toward polar residues: residues 148–163 (ETSS…QNPI) and 197–206 (GRPSPQNEGC). Positions 227 to 500 (VQWKNAYALC…EIHIVIWERK (274 aa)) constitute a USP domain. Cys-236 serves as the catalytic Nucleophile. The SUMO-binding stretch occupies residues 236–495 (CWLDCILSAL…EVPASEIHIV (260 aa)). The active-site Proton acceptor is His-456. Disordered stretches follow at residues 713 to 749 (LKPE…SLKE), 797 to 859 (GGFK…STSC), and 904 to 930 (AALM…GSPN). Positions 732 to 748 (ADSQTTTSKSLQNQSLK) are enriched in polar residues. Residues 810–819 (HVSKKARKSA) show a composition bias toward basic residues. Residues 821 to 832 (KPPPISKPPAGP) are compositionally biased toward pro residues. Ser-909 carries the post-translational modification Phosphoserine.

Belongs to the peptidase C19 family. In terms of assembly, interacts with ELL.

Its subcellular location is the nucleus. It is found in the cajal body. SUMO-specific isopeptidase involved in protein desumoylation. Specifically binds SUMO proteins with a higher affinity for SUMO2 and SUMO3 which it cleaves more efficiently. Also able to process full-length SUMO proteins to their mature forms. Plays a key role in RNA polymerase-II-mediated snRNA transcription in the Cajal bodies. Is a component of complexes that can bind to U snRNA genes. The chain is SUMO-specific isopeptidase USPL1 (USPL1) from Homo sapiens (Human).